Here is a 496-residue protein sequence, read N- to C-terminus: Glycerol kinase (496 aa).

Thr12 serves as a coordination point for ADP. 3 residues coordinate ATP: Thr12, Thr13, and Ser14. A sn-glycerol 3-phosphate-binding site is contributed by Thr12. Arg16 is an ADP binding site. Sn-glycerol 3-phosphate-binding residues include Arg82, Glu83, and Tyr134. The glycerol site is built by Arg82, Glu83, and Tyr134. A Phosphohistidine; by HPr modification is found at His230. Asp244 contributes to the sn-glycerol 3-phosphate binding site. The glycerol site is built by Asp244 and Gln245. ADP is bound by residues Thr266 and Gly309. Positions 266, 309, 313, and 410 each coordinate ATP. ADP contacts are provided by Gly410 and Asn414.

It belongs to the FGGY kinase family. The phosphoenolpyruvate-dependent sugar phosphotransferase system (PTS), including enzyme I, and histidine-containing protein (HPr) are required for the phosphorylation of, which leads to the activation of the enzyme.

The catalysed reaction is glycerol + ATP = sn-glycerol 3-phosphate + ADP + H(+). It functions in the pathway polyol metabolism; glycerol degradation via glycerol kinase pathway; sn-glycerol 3-phosphate from glycerol: step 1/1. Inhibited by fructose 1,6-bisphosphate and p-chloromercuribenzoate (PCMB). Key enzyme in the regulation of glycerol uptake and metabolism. Catalyzes the phosphorylation of glycerol to yield sn-glycerol 3-phosphate. In Thermus thermophilus, this protein is Glycerol kinase.